We begin with the raw amino-acid sequence, 787 residues long: Serine/threonine-protein kinase PLK4 (787 aa).

The region spanning 14 to 268 (YEVQHLLGKG…LEQVLRHPFM (255 aa)) is the Protein kinase domain. ATP is bound by residues 20 to 28 (LGKGGFASV) and Lys-43. Catalysis depends on Asp-139, which acts as the Proton acceptor. Residues 311-336 (SNESRSSQRLRSIEKSAQSSSNPQML) are disordered. Residues 386-505 (EQQMRVPPLN…ARFVGLVKSK (120 aa)) form the Cryptic POLO box 1 (CPB1) domain. A Cryptic POLO box 2 (CPB2) domain is found at 506-613 (TPKITYFSSL…GRRPLTDVSH (108 aa)). The POLO box domain occupies 675 to 755 (PIKRINIPDV…IPQVKLRLKC (81 aa)).

Belongs to the protein kinase superfamily. Ser/Thr protein kinase family. CDC5/Polo subfamily. As to quaternary structure, homodimer. Ubiquitinated by the SCF(Slimb) ubiquitin ligase complex; leading to its degradation by the proteasome during interphase and regulating centriole number and ensuring the block to centriole reduplication.

The protein localises to the cytoplasm. The protein resides in the cytoskeleton. It is found in the microtubule organizing center. It localises to the centrosome. Its subcellular location is the centriole. The catalysed reaction is L-seryl-[protein] + ATP = O-phospho-L-seryl-[protein] + ADP + H(+). The enzyme catalyses L-threonyl-[protein] + ATP = O-phospho-L-threonyl-[protein] + ADP + H(+). Functionally, serine/threonine-protein kinase that plays a central role in centriole duplication. Able to trigger procentriole formation on the surface of the mother centriole cylinder, using mother centriole as a platform, leading to the recruitment of centriole biogenesis proteins such as sas-6. When overexpressed, it is able to induce centrosome amplification through the simultaneous generation of multiple procentrioles adjoining each parental centriole during S phase. Centrosome amplification following overexpression can initiate tumorigenesis, highlighting the importance of centrosome regulation in cancers. The sequence is that of Serine/threonine-protein kinase PLK4 (SAK) from Drosophila willistoni (Fruit fly).